The primary structure comprises 200 residues: Cytochrome c biogenesis ATP-binding export protein CcmA (200 aa).

Positions 2 to 200 constitute an ABC transporter domain; the sequence is LDVIELDFDY…NKADYEEYHL (199 aa). An ATP-binding site is contributed by 34 to 41; the sequence is GSNGAGKT.

It belongs to the ABC transporter superfamily. CcmA exporter (TC 3.A.1.107) family. As to quaternary structure, the complex is composed of two ATP-binding proteins (CcmA) and two transmembrane proteins (CcmB).

It localises to the cell inner membrane. The catalysed reaction is heme b(in) + ATP + H2O = heme b(out) + ADP + phosphate + H(+). Part of the ABC transporter complex CcmAB involved in the biogenesis of c-type cytochromes; once thought to export heme, this seems not to be the case, but its exact role is uncertain. Responsible for energy coupling to the transport system. In Legionella pneumophila, this protein is Cytochrome c biogenesis ATP-binding export protein CcmA.